A 323-amino-acid polypeptide reads, in one-letter code: Cyclin-D5-1 (323 aa).

Disordered stretches follow at residues 17–36 and 281–323; these read ESSL…KQEP and HMTP…MRRL.

Belongs to the cyclin family. Cyclin D subfamily.

The chain is Cyclin-D5-1 (CYCD5-1) from Arabidopsis thaliana (Mouse-ear cress).